Reading from the N-terminus, the 283-residue chain is Large ribosomal subunit protein uL2 (283 aa).

Residues 215–283 form a disordered region; sequence RHKGIRPTVR…IRGRKKRINN (69 aa). The span at 274–283 shows a compositional bias: basic residues; that stretch reads IRGRKKRINN.

The protein belongs to the universal ribosomal protein uL2 family. Part of the 50S ribosomal subunit. Forms a bridge to the 30S subunit in the 70S ribosome.

Functionally, one of the primary rRNA binding proteins. Required for association of the 30S and 50S subunits to form the 70S ribosome, for tRNA binding and peptide bond formation. It has been suggested to have peptidyltransferase activity; this is somewhat controversial. Makes several contacts with the 16S rRNA in the 70S ribosome. This chain is Large ribosomal subunit protein uL2, found in Mycoplasma mobile (strain ATCC 43663 / 163K / NCTC 11711) (Mesomycoplasma mobile).